The following is a 283-amino-acid chain: Bifunctional protein FolD (283 aa).

NADP(+) contacts are provided by residues 165 to 167 (GAS) and Ser-190.

It belongs to the tetrahydrofolate dehydrogenase/cyclohydrolase family. Homodimer.

The catalysed reaction is (6R)-5,10-methylene-5,6,7,8-tetrahydrofolate + NADP(+) = (6R)-5,10-methenyltetrahydrofolate + NADPH. The enzyme catalyses (6R)-5,10-methenyltetrahydrofolate + H2O = (6R)-10-formyltetrahydrofolate + H(+). It participates in one-carbon metabolism; tetrahydrofolate interconversion. In terms of biological role, catalyzes the oxidation of 5,10-methylenetetrahydrofolate to 5,10-methenyltetrahydrofolate and then the hydrolysis of 5,10-methenyltetrahydrofolate to 10-formyltetrahydrofolate. The polypeptide is Bifunctional protein FolD (Cupriavidus pinatubonensis (strain JMP 134 / LMG 1197) (Cupriavidus necator (strain JMP 134))).